We begin with the raw amino-acid sequence, 157 residues long: SsrA-binding protein (157 aa).

The tract at residues 130–157 (HDKRQDMAKKDSQRRIQKELGQRQKGME) is disordered. Residues 132–157 (KRQDMAKKDSQRRIQKELGQRQKGME) are compositionally biased toward basic and acidic residues.

The protein belongs to the SmpB family.

It is found in the cytoplasm. Functionally, required for rescue of stalled ribosomes mediated by trans-translation. Binds to transfer-messenger RNA (tmRNA), required for stable association of tmRNA with ribosomes. tmRNA and SmpB together mimic tRNA shape, replacing the anticodon stem-loop with SmpB. tmRNA is encoded by the ssrA gene; the 2 termini fold to resemble tRNA(Ala) and it encodes a 'tag peptide', a short internal open reading frame. During trans-translation Ala-aminoacylated tmRNA acts like a tRNA, entering the A-site of stalled ribosomes, displacing the stalled mRNA. The ribosome then switches to translate the ORF on the tmRNA; the nascent peptide is terminated with the 'tag peptide' encoded by the tmRNA and targeted for degradation. The ribosome is freed to recommence translation, which seems to be the essential function of trans-translation. The protein is SsrA-binding protein of Alkaliphilus metalliredigens (strain QYMF).